Reading from the N-terminus, the 509-residue chain is 2-isopropylmalate synthase (509 aa).

Positions 5–267 (IQIFDTTLRD…QTALNLEETK (263 aa)) constitute a Pyruvate carboxyltransferase domain. Positions 14, 202, 204, and 238 each coordinate Mn(2+). The segment at 391 to 509 (KLETLQLQYV…AAENVEKVGN (119 aa)) is regulatory domain.

This sequence belongs to the alpha-IPM synthase/homocitrate synthase family. LeuA type 1 subfamily. Homodimer. Mn(2+) serves as cofactor.

The protein localises to the cytoplasm. The enzyme catalyses 3-methyl-2-oxobutanoate + acetyl-CoA + H2O = (2S)-2-isopropylmalate + CoA + H(+). It functions in the pathway amino-acid biosynthesis; L-leucine biosynthesis; L-leucine from 3-methyl-2-oxobutanoate: step 1/4. Functionally, catalyzes the condensation of the acetyl group of acetyl-CoA with 3-methyl-2-oxobutanoate (2-ketoisovalerate) to form 3-carboxy-3-hydroxy-4-methylpentanoate (2-isopropylmalate). The sequence is that of 2-isopropylmalate synthase from Staphylococcus aureus (strain MRSA252).